The sequence spans 294 residues: 4-hydroxy-tetrahydrodipicolinate synthase (294 aa).

Residue threonine 47 participates in pyruvate binding. The Proton donor/acceptor role is filled by tyrosine 136. Lysine 164 functions as the Schiff-base intermediate with substrate in the catalytic mechanism. Valine 206 contacts pyruvate.

This sequence belongs to the DapA family. In terms of assembly, homotetramer; dimer of dimers.

It is found in the cytoplasm. It carries out the reaction L-aspartate 4-semialdehyde + pyruvate = (2S,4S)-4-hydroxy-2,3,4,5-tetrahydrodipicolinate + H2O + H(+). It functions in the pathway amino-acid biosynthesis; L-lysine biosynthesis via DAP pathway; (S)-tetrahydrodipicolinate from L-aspartate: step 3/4. In terms of biological role, catalyzes the condensation of (S)-aspartate-beta-semialdehyde [(S)-ASA] and pyruvate to 4-hydroxy-tetrahydrodipicolinate (HTPA). In Nostoc punctiforme (strain ATCC 29133 / PCC 73102), this protein is 4-hydroxy-tetrahydrodipicolinate synthase.